The primary structure comprises 546 residues: Chaperonin GroEL (546 aa).

Residues 29–32 (TLGP), K50, 86–90 (DGTTT), G414, and D495 each bind ATP. The segment at 526–546 (AKEGAPAGGGMPDMGGMGGMM) is disordered. Residues 531–546 (PAGGGMPDMGGMGGMM) show a composition bias toward gly residues.

Belongs to the chaperonin (HSP60) family. As to quaternary structure, forms a cylinder of 14 subunits composed of two heptameric rings stacked back-to-back. Interacts with the co-chaperonin GroES.

The protein localises to the cytoplasm. It carries out the reaction ATP + H2O + a folded polypeptide = ADP + phosphate + an unfolded polypeptide.. In terms of biological role, together with its co-chaperonin GroES, plays an essential role in assisting protein folding. The GroEL-GroES system forms a nano-cage that allows encapsulation of the non-native substrate proteins and provides a physical environment optimized to promote and accelerate protein folding. This chain is Chaperonin GroEL, found in Jannaschia sp. (strain CCS1).